We begin with the raw amino-acid sequence, 340 residues long: Ribosomal RNA small subunit methyltransferase C (340 aa).

This sequence belongs to the methyltransferase superfamily. RsmC family. Monomer.

It localises to the cytoplasm. It carries out the reaction guanosine(1207) in 16S rRNA + S-adenosyl-L-methionine = N(2)-methylguanosine(1207) in 16S rRNA + S-adenosyl-L-homocysteine + H(+). Functionally, specifically methylates the guanine in position 1207 of 16S rRNA in the 30S particle. The polypeptide is Ribosomal RNA small subunit methyltransferase C (Vibrio cholerae serotype O1 (strain ATCC 39541 / Classical Ogawa 395 / O395)).